The primary structure comprises 256 residues: Isoprenyl transferase (256 aa).

Aspartate 33 is an active-site residue. Aspartate 33 serves as a coordination point for Mg(2+). Residues 34–37 (GNGR), tryptophan 38, arginine 46, histidine 50, and 78–80 (STE) each bind substrate. Residue asparagine 81 is the Proton acceptor of the active site. Residues tryptophan 82, arginine 84, arginine 201, and 207-209 (RIS) contribute to the substrate site. Glutamate 220 is a binding site for Mg(2+).

Belongs to the UPP synthase family. Homodimer. Mg(2+) serves as cofactor.

Its function is as follows. Catalyzes the condensation of isopentenyl diphosphate (IPP) with allylic pyrophosphates generating different type of terpenoids. The polypeptide is Isoprenyl transferase (Staphylococcus aureus (strain COL)).